The primary structure comprises 637 residues: tRNA uridine 5-carboxymethylaminomethyl modification enzyme MnmG (637 aa).

Residues 15–20, Ile127, and Ser182 contribute to the FAD site; that span reads GAGHAG. 276-290 is an NAD(+) binding site; it reads GPRYCPSIEDKIVRF. Gln373 provides a ligand contact to FAD.

The protein belongs to the MnmG family. Homodimer. Heterotetramer of two MnmE and two MnmG subunits. The cofactor is FAD.

The protein localises to the cytoplasm. Its function is as follows. NAD-binding protein involved in the addition of a carboxymethylaminomethyl (cmnm) group at the wobble position (U34) of certain tRNAs, forming tRNA-cmnm(5)s(2)U34. This is tRNA uridine 5-carboxymethylaminomethyl modification enzyme MnmG from Streptococcus pneumoniae serotype 4 (strain ATCC BAA-334 / TIGR4).